A 419-amino-acid polypeptide reads, in one-letter code: N-acylglucosamine 2-epimerase (419 aa).

A leucine-zipper region spans residues 185–206 (LLNLVEQLGEEDEEMTDKYAEL). Position 418 is a phosphoserine (Ser418).

It belongs to the N-acylglucosamine 2-epimerase family. In terms of assembly, homodimer. Forms a heterodimer with renin and inhibits its activity. As to expression, kidney, adrenal gland, brain, lung, spleen, ovary, testis and heart.

The catalysed reaction is an N-acyl-D-glucosamine = an N-acyl-D-mannosamine. It participates in amino-sugar metabolism; N-acetylneuraminate degradation. Its function is as follows. Catalyzes the interconversion of N-acetylglucosamine to N-acetylmannosamine. Involved in the N-glycolylneuraminic acid (Neu5Gc) degradation pathway. The chain is N-acylglucosamine 2-epimerase (Renbp) from Rattus norvegicus (Rat).